A 399-amino-acid polypeptide reads, in one-letter code: S-adenosylmethionine synthase (399 aa).

An ATP-binding site is contributed by histidine 16. Aspartate 18 provides a ligand contact to Mg(2+). Glutamate 44 is a binding site for K(+). 2 residues coordinate L-methionine: glutamate 57 and glutamine 100. The flexible loop stretch occupies residues 100 to 110 (QSPDIAQGVDT). Residues 175–177 (DGK), 246–247 (KF), aspartate 255, 261–262 (RK), alanine 278, and lysine 282 each bind ATP. Aspartate 255 contributes to the L-methionine binding site. An L-methionine-binding site is contributed by lysine 286. Lysine 341 participates in a covalent cross-link: Isoglutamyl lysine isopeptide (Lys-Gln) (interchain with Q-Cter in protein Pup).

This sequence belongs to the AdoMet synthase family. Homotetramer; dimer of dimers. Mg(2+) is required as a cofactor. K(+) serves as cofactor.

Its subcellular location is the cytoplasm. It carries out the reaction L-methionine + ATP + H2O = S-adenosyl-L-methionine + phosphate + diphosphate. Its pathway is amino-acid biosynthesis; S-adenosyl-L-methionine biosynthesis; S-adenosyl-L-methionine from L-methionine: step 1/1. Functionally, catalyzes the formation of S-adenosylmethionine (AdoMet) from methionine and ATP. The overall synthetic reaction is composed of two sequential steps, AdoMet formation and the subsequent tripolyphosphate hydrolysis which occurs prior to release of AdoMet from the enzyme. The sequence is that of S-adenosylmethionine synthase from Mycolicibacterium smegmatis (strain ATCC 700084 / mc(2)155) (Mycobacterium smegmatis).